Here is a 122-residue protein sequence, read N- to C-terminus: UPF0231 protein VP2494 (122 aa).

It belongs to the UPF0231 family.

The chain is UPF0231 protein VP2494 from Vibrio parahaemolyticus serotype O3:K6 (strain RIMD 2210633).